Consider the following 239-residue polypeptide: Ribonuclease PH (239 aa).

Phosphate contacts are provided by residues Arg87 and 125 to 127 (GTR).

This sequence belongs to the RNase PH family. In terms of assembly, homohexameric ring arranged as a trimer of dimers.

The enzyme catalyses tRNA(n+1) + phosphate = tRNA(n) + a ribonucleoside 5'-diphosphate. In terms of biological role, phosphorolytic 3'-5' exoribonuclease that plays an important role in tRNA 3'-end maturation. Removes nucleotide residues following the 3'-CCA terminus of tRNAs; can also add nucleotides to the ends of RNA molecules by using nucleoside diphosphates as substrates, but this may not be physiologically important. Probably plays a role in initiation of 16S rRNA degradation (leading to ribosome degradation) during starvation. The sequence is that of Ribonuclease PH from Acaryochloris marina (strain MBIC 11017).